Consider the following 1234-residue polypeptide: Protein Jumonji (1234 aa).

A compositionally biased stretch (basic residues) spans Met1–Ile11. Disordered stretches follow at residues Met1–Pro22, Ala68–Arg150, Leu169–Thr339, and Arg354–Gly548. Ser78 bears the Phosphoserine mark. Low complexity predominate over residues Ser86–Ser98. Positions Pro104 to Arg110 match the Nuclear localization signal motif. The segment covering Phe117–Pro129 has biased composition (polar residues). The tract at residues Ala141–Pro170 is sufficient for interaction with the PRC2 complex. A compositionally biased stretch (acidic residues) spans Gln180 to Glu193. Residues Ala197–Pro210 are compositionally biased toward polar residues. The span at Arg211 to Asn221 shows a compositional bias: basic residues. The segment covering Lys244–Gln264 has biased composition (basic and acidic residues). The span at Ala265 to Ala285 shows a compositional bias: low complexity. 2 stretches are compositionally biased toward polar residues: residues Ser304–Ala322 and Ser369–Ala384. At Lys378 the chain carries N6-acetyllysine. The segment covering Cys418 to Glu440 has biased composition (basic and acidic residues). Ser449 carries the phosphoserine modification. 2 stretches are compositionally biased toward basic and acidic residues: residues Val482 to Asn494 and Ser529 to Ser544. The JmjN domain maps to Ile555 to Glu596. The region spanning Trp619 to Pro711 is the ARID domain. The GSGFP motif signature appears at Gly872–Pro876. The JmjC domain occupies Pro882–Lys1046. The interval Glu1206–Ser1234 is disordered.

It belongs to the JARID2 family. In terms of assembly, associates with the PRC2 complex, which consists of the core components EED, EZH1 or EZH2, SUZ12, and RBBP4, and various combinations of accessory subunits including AEBP2, JARID2, PHF19, MTF2 and EPOP. Found in a monomeric PRC2.2 (class 2) complex consisting of at least SUZ12, RBBP4, AEBP2 and JARID2. Facilitates nucleosome binding of the PRC2 complex. Interacts with SUZ12 (via C2H2-type zinc finger domain); the interaction is direct; competes with EPOP for SUZ12 binding. Interacts with histone methyltransferases EHMT1/GLP1 and EHMT2/G9a. Interacts with GATA4 (via the N-terminal region). Interacts with NKX2-5 (via the C-terminal region). Interacts with RB1. Interacts with ZNF496. Interacts with ESRRB. Interacts with DDX18; this interaction inhibits the PRC2 complex. In terms of tissue distribution, widely expressed in embryos. In adults, expressed at high levels in heart, skeletal muscle, brain and thymus.

It localises to the nucleus. Its function is as follows. Regulator of histone methyltransferase complexes that plays an essential role in embryonic development, including heart and liver development, neural tube fusion process and hematopoiesis. Acts as an accessory subunit for the core PRC2 (Polycomb repressive complex 2) complex, which mediates histone H3K27 (H3K27me3) trimethylation on chromatin. Binds DNA and mediates the recruitment of the PRC2 complex to target genes in embryonic stem cells, thereby playing a key role in stem cell differentiation and normal embryonic development. In cardiac cells, it is required to repress expression of cyclin-D1 (CCND1) by activating methylation of 'Lys-9' of histone H3 (H3K9me) by the GLP1/EHMT1 and G9a/EHMT2 histone methyltransferases. Also acts as a transcriptional repressor of ANF via its interaction with GATA4 and NKX2-5. Participates in the negative regulation of cell proliferation signaling. Does not have histone demethylase activity. This is Protein Jumonji (Jarid2) from Mus musculus (Mouse).